Reading from the N-terminus, the 287-residue chain is Small ribosomal subunit biogenesis GTPase RsgA (287 aa).

One can recognise a CP-type G domain in the interval 61–218 (SSELIRPTVA…LVDTPGFTTL (158 aa)). GTP is bound by residues 110–113 (NKED) and 161–169 (GPSGAGKST). Zn(2+) is bound by residues C242, C247, H249, and C255.

Belongs to the TRAFAC class YlqF/YawG GTPase family. RsgA subfamily. Monomer. Associates with 30S ribosomal subunit, binds 16S rRNA. Zn(2+) serves as cofactor.

It localises to the cytoplasm. In terms of biological role, one of several proteins that assist in the late maturation steps of the functional core of the 30S ribosomal subunit. Helps release RbfA from mature subunits. May play a role in the assembly of ribosomal proteins into the subunit. Circularly permuted GTPase that catalyzes slow GTP hydrolysis, GTPase activity is stimulated by the 30S ribosomal subunit. In Clostridium perfringens (strain ATCC 13124 / DSM 756 / JCM 1290 / NCIMB 6125 / NCTC 8237 / Type A), this protein is Small ribosomal subunit biogenesis GTPase RsgA.